The sequence spans 376 residues: Transcriptional regulator STP4 (376 aa).

3 disordered regions span residues 25–58 (QNYCSIKSPSPTSTPTSTSLTMTSPPQLHNPHAS), 89–122 (SSNSPTPSNSSYSPTLLIPSNDRPASSSVYSNSS), and 137–210 (VNCI…NWKP). 2 stretches are compositionally biased toward low complexity: residues 32–50 (SPSPTSTPTSTSLTMTSPP) and 89–103 (SSNSPTPSNSSYSPT). Polar residues-rich tracts occupy residues 146-183 (PRSTSNLTENSEQSFTSQQSHPAISSNATITSPQLSVK) and 191-200 (EPQNSNTIIS). Residues 241–263 (HICKYCERGFARPNDLFRHVKCH) form a C2H2-type zinc finger.

It is found in the nucleus. Probable transcription factor involved in response to cell wall damage. The chain is Transcriptional regulator STP4 (STP4) from Candida albicans (strain SC5314 / ATCC MYA-2876) (Yeast).